The chain runs to 511 residues: MIFQSFDLVSALATLAACLVSVALLLAVSQQLWQLRWAATRDKSCKLPIPKGSMGFPLVGETFHWILQGSDFQSSRREKYGNVFKTHLLGRPLIRVTGAENVRKILMGEHHLVSTEWPRSTRMLLGPNSLANSIGDIHRHKRKVFSKIFSHEALESYLPKIQLVIQDTLRVWSSNPESINVYCEAQKLTFRMAIRVLLGFRLSDEELSQLFQVFQQFVENVFSLPVDVPFSGYRRGIRAREMLLKSLEKAIQEKLQNTQGKDYADALDILIESGKEHGKELTMQELKDGTLELIFAAYATTASASTSLIMQLLKHPSVLEKLREELRGNSILHNGCVCEGALRVETISSLHYLDCVIKEILRLFSPVSGGYRTVLQTFELDGFQIPKGWSVLYSIRDTHDTAPVFKDVDVFDPDRFGQDRTEDKDGRFHYLPFGGGVRNCLGKHLAKLFLKVLAIELASMSRFELATRTFPKIMPVPVVHPADELKVRFFGLDSNQNEIMTETEAMLGATV.

Cys-440 serves as a coordination point for heme.

Belongs to the cytochrome P450 family. The cofactor is heme.

Its subcellular location is the endoplasmic reticulum membrane. The protein localises to the microsome membrane. It catalyses the reaction all-trans-retinoate + reduced [NADPH--hemoprotein reductase] + O2 = all-trans-4-hydroxyretinoate + oxidized [NADPH--hemoprotein reductase] + H2O + H(+). It carries out the reaction all-trans-retinoate + reduced [NADPH--hemoprotein reductase] + O2 = all-trans-18-hydroxyretinoate + oxidized [NADPH--hemoprotein reductase] + H2O + H(+). A cytochrome P450 monooxygenase involved in the metabolism of retinoates (RAs), the active metabolites of vitamin A, and critical signaling molecules in animals. RAs exist as at least four different isomers: all-trans-RA (atRA), 9-cis-RA, 13-cis-RA, and 9,13-dicis-RA, where atRA is considered to be the biologically active isomer, although 9-cis-RA and 13-cis-RA also have activity. Catalyzes the hydroxylation of atRA primarily at C-4 and C-18, thereby contributing to the regulation of atRA homeostasis and signaling. Hydroxylation of atRA limits its biological activity and initiates a degradative process leading to its eventual elimination. Involved in the convertion of atRA to all-trans-4-oxo-RA. Can oxidize all-trans-13,14-dihydroretinoate (DRA) to metabolites which could include all-trans-4-oxo-DRA, all-trans-4-hydroxy-DRA, all-trans-5,8-epoxy-DRA, and all-trans-18-hydroxy-DRA. In Xenopus tropicalis (Western clawed frog), this protein is Cytochrome P450 26B1 (cyp26b1).